The sequence spans 201 residues: Superoxide dismutase [Mn] (201 aa).

Mn(2+) contacts are provided by H27, H81, D163, and H167.

Belongs to the iron/manganese superoxide dismutase family. Homodimer. Requires Mn(2+) as cofactor.

It is found in the secreted. The enzyme catalyses 2 superoxide + 2 H(+) = H2O2 + O2. In terms of biological role, destroys superoxide anion radicals which are normally produced within the cells and which are toxic to biological systems. In Streptococcus pyogenes serotype M3 (strain ATCC BAA-595 / MGAS315), this protein is Superoxide dismutase [Mn] (sodA).